Consider the following 464-residue polypeptide: Phospho-cellobiase (464 aa).

Catalysis depends on E172, which acts as the Proton donor. E361 acts as the Nucleophile in catalysis.

It belongs to the glycosyl hydrolase 1 family.

This Klebsiella oxytoca protein is Phospho-cellobiase (casB).